A 73-amino-acid polypeptide reads, in one-letter code: Translation initiation factor IF-1 (73 aa).

In terms of domain architecture, S1-like spans 1-73 (MAKKEDTIVL…TKARVVYRHR (73 aa)).

The protein belongs to the IF-1 family. In terms of assembly, component of the 30S ribosomal translation pre-initiation complex which assembles on the 30S ribosome in the order IF-2 and IF-3, IF-1 and N-formylmethionyl-tRNA(fMet); mRNA recruitment can occur at any time during PIC assembly.

The protein localises to the cytoplasm. In terms of biological role, one of the essential components for the initiation of protein synthesis. Stabilizes the binding of IF-2 and IF-3 on the 30S subunit to which N-formylmethionyl-tRNA(fMet) subsequently binds. Helps modulate mRNA selection, yielding the 30S pre-initiation complex (PIC). Upon addition of the 50S ribosomal subunit IF-1, IF-2 and IF-3 are released leaving the mature 70S translation initiation complex. The polypeptide is Translation initiation factor IF-1 (Chlamydia muridarum (strain MoPn / Nigg)).